The primary structure comprises 145 residues: uncharacterized protein (145 aa).

The next 4 helical transmembrane spans lie at 1–21, 28–48, 54–74, and 96–116; these read MELF…YFLI, TVLI…MGAL, SMTS…AYVM, and FFLI…IPSA.

Belongs to the DcuC/DcuD transporter (TC 2.A.61) family.

The protein localises to the cell membrane. This is an uncharacterized protein from Haemophilus influenzae (strain ATCC 51907 / DSM 11121 / KW20 / Rd).